A 514-amino-acid polypeptide reads, in one-letter code: Membrane-bound lytic murein transglycosylase F (514 aa).

The N-terminal stretch at 1-30 is a signal peptide; that stretch reads MKKLKINYLFIGILTLLLAAALWPSIPWFG. The non-LT domain stretch occupies residues 31-269; sequence KTENHIAAIQ…RIEEKYLGHG (239 aa). The tract at residues 270–514 is LT domain; the sequence is DDFDYVDTRS…LFTPQKKEEK (245 aa). Residue E314 is part of the active site.

The protein in the N-terminal section; belongs to the bacterial solute-binding protein 3 family. In the C-terminal section; belongs to the transglycosylase Slt family.

It is found in the cell outer membrane. The catalysed reaction is Exolytic cleavage of the (1-&gt;4)-beta-glycosidic linkage between N-acetylmuramic acid (MurNAc) and N-acetylglucosamine (GlcNAc) residues in peptidoglycan, from either the reducing or the non-reducing ends of the peptidoglycan chains, with concomitant formation of a 1,6-anhydrobond in the MurNAc residue.. In terms of biological role, murein-degrading enzyme that degrades murein glycan strands and insoluble, high-molecular weight murein sacculi, with the concomitant formation of a 1,6-anhydromuramoyl product. Lytic transglycosylases (LTs) play an integral role in the metabolism of the peptidoglycan (PG) sacculus. Their lytic action creates space within the PG sacculus to allow for its expansion as well as for the insertion of various structures such as secretion systems and flagella. This Salmonella paratyphi A (strain ATCC 9150 / SARB42) protein is Membrane-bound lytic murein transglycosylase F.